The following is a 423-amino-acid chain: Serine--tRNA ligase (423 aa).

An L-serine-binding site is contributed by 231–233; it reads TAE. ATP is bound at residue 262–264; it reads RSE. An L-serine-binding site is contributed by E285. 349–352 lines the ATP pocket; the sequence is EIGS. S385 serves as a coordination point for L-serine.

The protein belongs to the class-II aminoacyl-tRNA synthetase family. Type-1 seryl-tRNA synthetase subfamily. Homodimer. The tRNA molecule binds across the dimer.

It localises to the cytoplasm. It catalyses the reaction tRNA(Ser) + L-serine + ATP = L-seryl-tRNA(Ser) + AMP + diphosphate + H(+). The catalysed reaction is tRNA(Sec) + L-serine + ATP = L-seryl-tRNA(Sec) + AMP + diphosphate + H(+). It participates in aminoacyl-tRNA biosynthesis; selenocysteinyl-tRNA(Sec) biosynthesis; L-seryl-tRNA(Sec) from L-serine and tRNA(Sec): step 1/1. Catalyzes the attachment of serine to tRNA(Ser). Is also able to aminoacylate tRNA(Sec) with serine, to form the misacylated tRNA L-seryl-tRNA(Sec), which will be further converted into selenocysteinyl-tRNA(Sec). This Acholeplasma laidlawii (strain PG-8A) protein is Serine--tRNA ligase.